The chain runs to 258 residues: Phosphoadenosine 5'-phosphosulfate reductase (258 aa).

Cys-244 acts as the Nucleophile; cysteine thiosulfonate intermediate in catalysis.

Belongs to the PAPS reductase family. CysH subfamily.

Its subcellular location is the cytoplasm. The catalysed reaction is [thioredoxin]-disulfide + sulfite + adenosine 3',5'-bisphosphate + 2 H(+) = [thioredoxin]-dithiol + 3'-phosphoadenylyl sulfate. The protein operates within sulfur metabolism; hydrogen sulfide biosynthesis; sulfite from sulfate: step 3/3. In terms of biological role, catalyzes the formation of sulfite from phosphoadenosine 5'-phosphosulfate (PAPS) using thioredoxin as an electron donor. The sequence is that of Phosphoadenosine 5'-phosphosulfate reductase from Vibrio vulnificus (strain CMCP6).